A 1343-amino-acid polypeptide reads, in one-letter code: MGYSYSEKKRIRKDFGKRPQVLNVPYLLTIQLDSFDKFIQKDPEGQQGLEAAFRSVFPIVSNNGYTELQYVDYRLEEPEFDVRECQIRGSTYAAGLRVKLRLVSYDKESSSRAVKDIKENEVYMGEIPLMTDNGTFVINGTERVIVSQLHRSPGVFFDSDKGKTHSSGKVLYNARIIPYRGSWLDFEFDPKDNLFARIDRRRKLPATIILRALGYTTEEILNLFFDKITFEIAGDKLLMTLVPERLRGETASFDIEANGKVYVERGRRITARHIKALEKDNISQVVVPSEYILGKVASKDYVDLESGEIICPANGEISLETLAKLAQAGYTTIETLFTNDLDYGPYISETLRVDPTYDKTSALYEIYRMMRPGEPPTPESSEALFNNLFFSAERYDLSTVGRMKFNRSLAFPEGEGAGILSNEDIIAVMRKLIDIRNGRGEVDDIDHLGNRRIRSVGEMAENQFRIGLVRVERAVKERLSLGDLDAITPQDLINPKPISAAVKEFFGSSQLSQFMDQNNPLSEVTHKRRISALGPGGLTRERAGFEVRDVHNTHYGRLCPIETPEGPNIGLINSLSAFARTNDYGFLETPYRKVVDGQVTEEIEYLSVIDEANYIIAQANSNLDENNRFTDAFVTARGERGESGLYKPEDIHYMDVSTQQVVSVAAALIPFLEHDDANRALMGANMQRQAVPTLRADKPLVGTGMEKPIALDSGVAVVAKRGGTVQYVDASRIVIKVNEDETIAGEAGIDIYNLIKYTRSNQNTCINQIPCVNLGDPINRGEVLADGPSTDLGELALGQNIRVAFMPWNGYNFEDSMLVSERVVQQDRFTTIHIQELSCVARDTKLGAEEITADIPNVGESALSKLDESGIVYVGAEVKGGDILVGKVTPKGETQLTPEEKLLRAIFGEKASDVKDSSLRVPNGTSGTVIDVQVFTRDGVEKDKRALEIEEMQLREAKKDLTEELEILEAGLFARVRNLLISSGADAAQLDKLDRTKWLEQTIADEEKQNQLEQLAEQYEELRKEFEHKLEVKRKKIIKGDDLAPGVLKVVKVYLAVKRQIQPGDKMAGRHGNKGVISKINPVEDMPYDENGQPVEIVLNPLGVPSRMNIGQILETHLGLAAKGIGDQINAMLKQKQEVEKLRSYIQKAYDLLGNGSQKVDLSTFTDEEVLRLAGNLRKGLPVATPVFDGADEAEIKELLKLGGLPTSGQITLYDGRTGEKFERPVTVGYMYMLKLNHLVDDKMHARSTGSYSLVTQQPLGGKAQFGGQRFGEMEVWALEAYGAAYTLQEMLTVKSDDVNGRTKMYKNIVSGNQHMEPGTPESFNVIMKEIRSLGLNIELDEE.

The protein belongs to the RNA polymerase beta chain family. As to quaternary structure, the RNAP catalytic core consists of 2 alpha, 1 beta, 1 beta' and 1 omega subunit. When a sigma factor is associated with the core the holoenzyme is formed, which can initiate transcription.

The catalysed reaction is RNA(n) + a ribonucleoside 5'-triphosphate = RNA(n+1) + diphosphate. Functionally, DNA-dependent RNA polymerase catalyzes the transcription of DNA into RNA using the four ribonucleoside triphosphates as substrates. This is DNA-directed RNA polymerase subunit beta from Haemophilus influenzae (strain ATCC 51907 / DSM 11121 / KW20 / Rd).